The sequence spans 215 residues: Ribonuclease HII (215 aa).

The region spanning 19–213 (QTVAGVDEVG…SLRQPSQQID (195 aa)) is the RNase H type-2 domain. A divalent metal cation-binding residues include D25, E26, and D121.

It belongs to the RNase HII family. Requires Mn(2+) as cofactor. Mg(2+) is required as a cofactor.

The protein localises to the cytoplasm. The catalysed reaction is Endonucleolytic cleavage to 5'-phosphomonoester.. Endonuclease that specifically degrades the RNA of RNA-DNA hybrids. In Synechococcus elongatus (strain ATCC 33912 / PCC 7942 / FACHB-805) (Anacystis nidulans R2), this protein is Ribonuclease HII.